Here is a 241-residue protein sequence, read N- to C-terminus: Ubiquinone biosynthesis O-methyltransferase (241 aa).

Residues Arg46, Gly66, Asp87, and Met131 each contribute to the S-adenosyl-L-methionine site.

The protein belongs to the methyltransferase superfamily. UbiG/COQ3 family.

It carries out the reaction a 3-demethylubiquinol + S-adenosyl-L-methionine = a ubiquinol + S-adenosyl-L-homocysteine + H(+). The catalysed reaction is a 3-(all-trans-polyprenyl)benzene-1,2-diol + S-adenosyl-L-methionine = a 2-methoxy-6-(all-trans-polyprenyl)phenol + S-adenosyl-L-homocysteine + H(+). It participates in cofactor biosynthesis; ubiquinone biosynthesis. Its function is as follows. O-methyltransferase that catalyzes the 2 O-methylation steps in the ubiquinone biosynthetic pathway. The chain is Ubiquinone biosynthesis O-methyltransferase from Bordetella pertussis (strain Tohama I / ATCC BAA-589 / NCTC 13251).